Here is a 156-residue protein sequence, read N- to C-terminus: MTEALRRVWAKDLDARALYELLKLRVEVFVVEQACPYPELDGRDLLAETRHFWLETPDGEVTCTLRLMEEHAGGEKVFRIGRLCTKRDARGQGHSNRLLCAALAEVGDYPCRIDAQAYLTAMYAQHGFVRDGDEFLDDGIPHVPMLRPGSGQVERP.

The 143-residue stretch at 8 to 150 (VWAKDLDARA…PHVPMLRPGS (143 aa)) folds into the N-acetyltransferase domain.

Belongs to the UPF0039 (ElaA) family.

The polypeptide is UPF0039 protein Mb2876c (Mycobacterium bovis (strain ATCC BAA-935 / AF2122/97)).